A 398-amino-acid polypeptide reads, in one-letter code: Cyclic GMP-AMP synthase-like receptor (398 aa).

Residues Ser-57 and 69-71 (EFD) contribute to the ATP site. Residues Glu-69, Asp-71, and Asp-192 each contribute to the Mg(2+) site. GTP contacts are provided by residues Asp-192 and 240–247 (SLSFQEQE). Residues 244–247 (QEQE), Lys-265, and 277–281 (SYYIK) each bind ATP. The Mn(2+) site is built by Ile-288, Glu-289, and Asp-292.

The protein belongs to the mab-21 family. Requires Mg(2+) as cofactor. The cofactor is Mn(2+).

The catalysed reaction is GTP + ATP = 2',3'-cGAMP + 2 diphosphate. It catalyses the reaction GTP + ATP = pppGp(2'-5')A + diphosphate. It carries out the reaction pppGp(2'-5')A = 2',3'-cGAMP + diphosphate. With respect to regulation, the enzyme activity is specifically activated by double-stranded RNA (dsRNA). Its function is as follows. Nucleotidyltransferase that catalyzes the formation of cyclic GMP-AMP (2',3'-cGAMP) from ATP and GTP and plays a key role in innate immunity. Acts as a key sensor of double-stranded RNA (dsRNA), the presence of dsRNA in the cytoplasm being a danger signal that triggers the immune responses. Directly binds dsRNA, activating the nucleotidyltransferase activity, leading to synthesis of 2',3'-cGAMP, a second messenger that binds to and activates Sting, thereby triggering the antiviral immune response via activation of the NF-kappa-B transcription factor Rel (Relish). The sequence is that of Cyclic GMP-AMP synthase-like receptor from Tribolium castaneum (Red flour beetle).